The following is a 95-amino-acid chain: Small ribosomal subunit protein bS18 (95 aa).

The protein belongs to the bacterial ribosomal protein bS18 family. Part of the 30S ribosomal subunit. Forms a tight heterodimer with protein bS6.

Binds as a heterodimer with protein bS6 to the central domain of the 16S rRNA, where it helps stabilize the platform of the 30S subunit. The sequence is that of Small ribosomal subunit protein bS18 from Rickettsia typhi (strain ATCC VR-144 / Wilmington).